A 608-amino-acid chain; its full sequence is Tectonic-3 (608 aa).

Residues 1-22 (MRTPQLALLQVFLLMFPDGVRP) form the signal peptide. The tract at residues 23-58 (QPSSSPSGAVPTSLDLQPGTVGGTLQSSSEATATRP) is disordered. The Extracellular portion of the chain corresponds to 23–586 (QPSSSPSGAV…AFSRGVSSQK (564 aa)). Polar residues predominate over residues 45-54 (GTLQSSSEAT). Residues Asn-78, Asn-179, and Asn-347 are each glycosylated (N-linked (GlcNAc...) asparagine). A helical membrane pass occupies residues 587–607 (CSVSPVLILCLLLLGVLNLET). Thr-608 is a topological domain (cytoplasmic).

The protein belongs to the tectonic family. As to quaternary structure, part of the tectonic-like complex (also named B9 complex).

The protein resides in the membrane. In terms of biological role, part of the tectonic-like complex which is required for tissue-specific ciliogenesis and may regulate ciliary membrane composition. May be involved in apoptosis regulation. Necessary for signal transduction through the sonic hedgehog (Shh) signaling pathway. This is Tectonic-3 (TCTN3) from Macaca fascicularis (Crab-eating macaque).